Here is a 250-residue protein sequence, read N- to C-terminus: Large ribosomal subunit protein uL29m (250 aa).

At lysine 144 the chain carries N6-acetyllysine.

This sequence belongs to the universal ribosomal protein uL29 family. In terms of assembly, component of the mitochondrial large ribosomal subunit (mt-LSU). Mature mammalian 55S mitochondrial ribosomes consist of a small (28S) and a large (39S) subunit. The 28S small subunit contains a 12S ribosomal RNA (12S mt-rRNA) and 30 different proteins. The 39S large subunit contains a 16S rRNA (16S mt-rRNA), a copy of mitochondrial valine transfer RNA (mt-tRNA(Val)), which plays an integral structural role, and 52 different proteins.

Its subcellular location is the mitochondrion. This chain is Large ribosomal subunit protein uL29m (MRPL47), found in Homo sapiens (Human).